Reading from the N-terminus, the 707-residue chain is Caprin-1 (707 aa).

Composition is skewed to low complexity over residues 1-15 (MPSA…SKSS) and 22-43 (GSSG…PATG). A disordered region spans residues 1 to 48 (MPSATSHSGSGSKSSGPPPPSGSSGSEAAAGAAAPASQHPATGTGAVQ). At proline 2 the chain carries N-acetylproline. Residue serine 10 is modified to Phosphoserine. Positions 58–92 (VIDKKLRNLEKKKGKLDDYQERMNKGERLNQDQLD) form a coiled coil. Serine 113 bears the Phosphoserine mark. The stretch at 123 to 151 (KTIKKTARREQLMREEAEQKRLKTVLELQ) forms a coiled coil. Arginine 163 carries the post-translational modification Omega-N-methylarginine. The segment at 325-347 (LQQQPQAASPSVPEPHSLTPVAQ) is disordered. The segment covering 326-335 (QQQPQAASPS) has biased composition (low complexity). Phosphoserine occurs at positions 333 and 341. The G3BP1-binding stretch occupies residues 358-379 (QDLMAQMQGPYNFIQDSMLDFE). Disordered stretches follow at residues 412–443 (ESRL…YTAS), 523–558 (PVPP…EQTE), and 570–620 (TYHG…RGLM). The span at 431 to 443 (PLVSSTSEGYTAS) shows a compositional bias: polar residues. Residues 535–558 (QQSQYQASYNQSFSSQPHQVEQTE) are compositionally biased toward low complexity. Residues 572–603 (HGSQDQPHQVPGNHQQPPQQSTGFPRSSQPYY) show a composition bias toward polar residues. Phosphotyrosine is present on tyrosine 623. Omega-N-methylarginine occurs at positions 624 and 631. A phosphotyrosine mark is found at tyrosine 634 and tyrosine 637. Omega-N-methylarginine is present on arginine 638. The segment covering 641 to 655 (FSNTPNSGYTQSQFN) has biased composition (polar residues). The disordered stretch occupies residues 641–707 (FSNTPNSGYT…MPQMNTQQVN (67 aa)). Serine 642 and serine 647 each carry an O-linked (GlcNAc) serine glycan. Phosphotyrosine occurs at positions 649, 660, 663, and 668. Composition is skewed to low complexity over residues 674–684 (RGSGQSGPRGA) and 695–707 (NRGM…QQVN). Residue arginine 696 is modified to Asymmetric dimethylarginine; alternate. Arginine 696 is modified (omega-N-methylarginine; alternate).

Belongs to the caprin family. As to quaternary structure, may form homomultimers. Interacts with G3BP1; interaction is direct and promotes stress granule formation. Interacts with G3BP2; interaction is direct and promotes stress granule formation. Interacts with PQBP1. Interacts with DDX3X. Interacts (when phosphorylated by EPHA4) with FMR1; interaction with FMR1 promotes formation of a membraneless compartment. Post-translationally, tyrosine phosphorylation by EPHA4 promotes interaction with FMR1 and liquid-liquid phase separation (LLPS) for the formation of a membraneless compartment that concentrates mRNAs with associated regulatory factors. In terms of processing, O-glycosylated (O-GlcNAcylated), in a cell cycle-dependent manner. O-glycosylation by OGT inhibit ability to undergo liquid-liquid phase separation (LLPS). Expressed in hippocampal and neocortical pyramidal neurons, but not in Purkinje cells.

The protein localises to the cytoplasm. Its subcellular location is the cytoplasmic ribonucleoprotein granule. It is found in the cytosol. The protein resides in the cell projection. It localises to the dendrite. The protein localises to the lamellipodium. Its activity is regulated as follows. Ability to mediate liquid-liquid phase separation is regulated by ATP: moderate concentrations of ATP enhance phase separation, whereas high concentrations of ATP lead to inhibition of phase separation. MRNA-binding protein that acts as a regulator of mRNAs transport, translation and/or stability, and which is involved in neurogenesis, synaptic plasticity in neurons and cell proliferation and migration in multiple cell types. Plays an essential role in cytoplasmic stress granule formation. Acts as an mRNA regulator by mediating formation of some phase-separated membraneless compartment: undergoes liquid-liquid phase separation upon binding to target mRNAs, leading to assemble mRNAs into cytoplasmic ribonucleoprotein granules that concentrate mRNAs with associated regulatory factors. Undergoes liquid-liquid phase separation following phosphorylation and interaction with FMR1, promoting formation of cytoplasmic ribonucleoprotein granules that concentrate mRNAs with factors that inhibit translation and mediate deadenylation of target mRNAs. In these cytoplasmic ribonucleoprotein granules, CAPRIN1 mediates recruitment of CNOT7 deadenylase, leading to mRNA deadenylation and degradation. Binds directly and selectively to MYC and CCND2 mRNAs. In neuronal cells, directly binds to several mRNAs associated with RNA granules, including BDNF, CAMK2A, CREB1, MAP2, NTRK2 mRNAs, as well as to GRIN1 and KPNB1 mRNAs, but not to rRNAs. This chain is Caprin-1 (Caprin1), found in Rattus norvegicus (Rat).